The sequence spans 169 residues: E1B protein, small T-antigen (169 aa).

The segment at 147 to 169 is disordered; the sequence is GSVVEEEQGEEHLARDSDDPFFD. The segment covering 156-169 has biased composition (basic and acidic residues); sequence EEHLARDSDDPFFD.

It belongs to the adenoviridae E1B 19 kDa protein family.

The protein is E1B protein, small T-antigen of Canine adenovirus serotype 1 (strain Glaxo) (CAdV-1).